The primary structure comprises 49 residues: Large ribosomal subunit protein bL33C (49 aa).

Residues 21–49 (KNKRNNPDRVEFKKYCPRDKKSTLHRETK) form a disordered region. Residues 25-49 (NNPDRVEFKKYCPRDKKSTLHRETK) show a composition bias toward basic and acidic residues.

The protein belongs to the bacterial ribosomal protein bL33 family.

This is Large ribosomal subunit protein bL33C from Bacillus licheniformis (strain ATCC 14580 / DSM 13 / JCM 2505 / CCUG 7422 / NBRC 12200 / NCIMB 9375 / NCTC 10341 / NRRL NRS-1264 / Gibson 46).